Reading from the N-terminus, the 410-residue chain is Chorismate synthase (410 aa).

Residues arginine 40 and arginine 46 each contribute to the NADP(+) site. FMN contacts are provided by residues 129–131 (RSS), 257–258 (QA), glycine 302, 317–321 (KPISS), and arginine 343.

It belongs to the chorismate synthase family. As to quaternary structure, homotetramer. Requires FMNH2 as cofactor.

The enzyme catalyses 5-O-(1-carboxyvinyl)-3-phosphoshikimate = chorismate + phosphate. The protein operates within metabolic intermediate biosynthesis; chorismate biosynthesis; chorismate from D-erythrose 4-phosphate and phosphoenolpyruvate: step 7/7. In terms of biological role, catalyzes the anti-1,4-elimination of the C-3 phosphate and the C-6 proR hydrogen from 5-enolpyruvylshikimate-3-phosphate (EPSP) to yield chorismate, which is the branch point compound that serves as the starting substrate for the three terminal pathways of aromatic amino acid biosynthesis. This reaction introduces a second double bond into the aromatic ring system. This chain is Chorismate synthase, found in Chlorobaculum parvum (strain DSM 263 / NCIMB 8327) (Chlorobium vibrioforme subsp. thiosulfatophilum).